The following is a 319-amino-acid chain: HTH-type transcriptional regulator YidZ (319 aa).

One can recognise an HTH lysR-type domain in the interval Leu8–Thr65. Positions Val25–Ala44 form a DNA-binding region, H-T-H motif.

It belongs to the LysR transcriptional regulatory family.

In terms of biological role, involved in anaerobic NO protection. The protein is HTH-type transcriptional regulator YidZ of Escherichia coli O157:H7 (strain EC4115 / EHEC).